The sequence spans 148 residues: uncharacterized protein (148 aa).

Polar residues predominate over residues 1-17; that stretch reads MEGLQRSTISFRRQGSS. Positions 1-148 are disordered; sequence MEGLQRSTIS…SRRRIVTKKR (148 aa). 2 stretches are compositionally biased toward basic and acidic residues: residues 36-47 and 58-67; these read EQKDESQRDEQP and KPIDEKDKLR. Phosphoserine is present on residues serine 100 and serine 107. The segment covering 128-148 has biased composition (basic residues); sequence VNPRKRPPKRRSRRRIVTKKR.

This is an uncharacterized protein from Arabidopsis thaliana (Mouse-ear cress).